Here is an 839-residue protein sequence, read N- to C-terminus: MGTRATTICSLFFLLWVLAEPAENSDFYLPGDYLLGGLFSLHANMKGIVHLNFLQVPMCKEYEVKVIGYNLMQAMRFAVEEINNDSSLLPGVLLGYEIVDVCYISNNVQPVLYFLAHEDNLLPIQEDYSNYISRVVAVIGPDNSESVMTVANFLSLFLLPQITYSAISDELQDKVRFPALLRTTPSADHHVEAMVQLMLHFRWNWIIVLVSSDTYGRDNGQLLGERLARRDICIAFQETLPTLQPNQNMTSEERQRLVTIVDKLQQSTARVVVVFSPDLSLYDFFNEVLRQNFTGAVWIASESWAIDPVLHNLTELRHLGTFLGITIQSVPIPGFSEFREWSPQAGPPPLSRTSQSYTCNQECDNCLNATLSFNTILRLSGERVVYSVYSAVYAVAHALHSLLGCDNSTCTKRVVYPWQLLEEIWKVNFTLLDHQIFFDPQGDVALHLEIVQWQWDRSQNPFQSVASYYPLQRQLKHIQDISWHTINNTIPVSMCSKRCQSGQKKKPVGIHVCCFECIDCLPGTFLNHTEDEYECQACPNNEWSYQSETSCFKRQLVFLEWHEAPTIAVALLAALGFLSTLAILVIFWRHFQTPIVRSAGGPMCFLMLTLLLVAYMVVPVYVGPPKVSTCLCRQALFPLCFTICISCIAVRSFQIVCAFKMASRFPRAYSYWVRYQGPYVSMAFITVLKMVIVVIGMLATGLSPTTRTDPDDPKITIVSCNPNYRNSLLFNTSLDLLLSVVGFSFAYMGKELPTNYNEAKFITLSMTFYFTSSVSLCTFMSAYSGVLVTIVDLLVTVLNLLAISLGYFGPKCYMILFYPERNTPAYFNSMIQGYTMRRD.

Positions 1-19 are cleaved as a signal peptide; sequence MGTRATTICSLFFLLWVLA. At 20–566 the chain is on the extracellular side; the sequence is EPAENSDFYL…VFLEWHEAPT (547 aa). Residues Asn-84, Asn-248, Asn-292, Asn-312, Asn-368, Asn-407, Asn-428, Asn-487, and Asn-527 are each glycosylated (N-linked (GlcNAc...) asparagine). The chain crosses the membrane as a helical span at residues 567 to 587; that stretch reads IAVALLAALGFLSTLAILVIF. Topologically, residues 588–602 are cytoplasmic; the sequence is WRHFQTPIVRSAGGP. A helical membrane pass occupies residues 603–623; that stretch reads MCFLMLTLLLVAYMVVPVYVG. At 624 to 635 the chain is on the extracellular side; sequence PPKVSTCLCRQA. The helical transmembrane segment at 636–656 threads the bilayer; sequence LFPLCFTICISCIAVRSFQIV. Residues 657–681 are Cytoplasmic-facing; the sequence is CAFKMASRFPRAYSYWVRYQGPYVS. The helical transmembrane segment at 682 to 702 threads the bilayer; sequence MAFITVLKMVIVVIGMLATGL. Topologically, residues 703–727 are extracellular; that stretch reads SPTTRTDPDDPKITIVSCNPNYRNS. A helical membrane pass occupies residues 728 to 748; sequence LLFNTSLDLLLSVVGFSFAYM. At 749–760 the chain is on the cytoplasmic side; it reads GKELPTNYNEAK. A helical transmembrane segment spans residues 761 to 781; sequence FITLSMTFYFTSSVSLCTFMS. Residues 782–784 are Extracellular-facing; sequence AYS. A helical membrane pass occupies residues 785-805; the sequence is GVLVTIVDLLVTVLNLLAISL. Topologically, residues 806 to 839 are cytoplasmic; sequence GYFGPKCYMILFYPERNTPAYFNSMIQGYTMRRD.

Belongs to the G-protein coupled receptor 3 family. TAS1R subfamily. As to quaternary structure, forms heterodimers with TAS1R3.

The protein resides in the cell membrane. Functionally, putative taste receptor. TAS1R2/TAS1R3 recognizes diverse natural and synthetic sweeteners. The sequence is that of Taste receptor type 1 member 2 (TAS1R2) from Gorilla gorilla gorilla (Western lowland gorilla).